A 963-amino-acid chain; its full sequence is uncharacterized protein (963 aa).

Coiled coils occupy residues 176–236 (NGRN…HIRM) and 373–467 (DYEW…KKTV). Residues 468-488 (IAAGMLFIVLFSLLQQWIPAI) traverse the membrane as a helical segment. Coiled-coil stretches lie at residues 536-570 (RNKQ…AEMA) and 647-789 (ALHT…LEAS).

The protein localises to the cell membrane. This is an uncharacterized protein from Bacillus subtilis (strain 168).